The following is a 199-amino-acid chain: MDEEMLIPEEEYQKSGVHIGTQVKSSDMKPYIFKIRNDGLYILDVKKTNSKLIVAGKMLARFEPQDILVVAQRQYAFRPVAKFAEVTGATAITGRFNPGTLTNPSLKFYKEVKVIIVTDPLADVQAMKEAVKIGIPIIALCDANNKTDFVDLIIPTNNKGRRSLAVIYWLLAREILKNRGTITSYDQFKYTIDDFEAQI.

This sequence belongs to the universal ribosomal protein uS2 family.

This chain is Small ribosomal subunit protein uS2 (rps2), found in Thermoplasma acidophilum (strain ATCC 25905 / DSM 1728 / JCM 9062 / NBRC 15155 / AMRC-C165).